The primary structure comprises 162 residues: UPF0254 protein MTH1148 homolog (162 aa).

This sequence belongs to the UPF0254 family.

The polypeptide is UPF0254 protein MTH1148 homolog (Methanothermobacter thermautotrophicus (strain Winter) (Methanobacterium thermoautotrophicum)).